We begin with the raw amino-acid sequence, 1671 residues long: Fatty acid synthase alpha subunit aflA (1671 aa).

The segment at 40 to 60 (ITEEAPTEQPPLSTPPSLPQT) is disordered. Residues 47 to 58 (EQPPLSTPPSLP) show a composition bias toward pro residues. The Carrier domain maps to 75–153 (DVALSRVQIV…DANPTVQLGK (79 aa)). Ser-113 is subject to O-(pantetheine 4'-phosphoryl)serine. The interval 492–729 (GKTFLVTGAG…AMLLTPDFVA (238 aa)) is ketoreductase (KR) domain. Residues 926–1428 (MEVLQEVAVE…QKGGQVVGVA (503 aa)) enclose the Ketosynthase family 3 (KS3) domain. The For beta-ketoacyl synthase activity role is filled by Cys-1113. Positions 1244-1270 (SMISVTSRPSSRSSTSSEVSDKSSLTS) are enriched in low complexity. Positions 1244-1288 (SMISVTSRPSSRSSTSSEVSDKSSLTSITSISNPAPRAQRARSTT) are disordered. Residues His-1313 and His-1354 each act as for beta-ketoacyl synthase activity in the active site. The tract at residues 1497–1521 (PSTGQYRFRSDATPALDDDALPPPG) is disordered. A Mg(2+)-binding site is contributed by Asp-1552. Acetyl-CoA-binding positions include 1552–1554 (DLV), 1598–1608 (EAVFKCLQTHS), 1622–1625 (HGGN), and 1652–1654 (ISY). Ser-1653 serves as a coordination point for Mg(2+).

It belongs to the thiolase-like superfamily. Fungal fatty acid synthetase subunit alpha family. [Alpha(6)beta(6)] hexamers of two multifunctional subunits (alpha and beta). In terms of processing, 4'-phosphopantetheine is transferred from CoA to a specific serine of the acyl carrier domain by the C-terminal PPT domain. This modification is essential for activity because fatty acids are bound in thioester linkage to the sulfhydryl of the prosthetic group.

It catalyses the reaction acetyl-CoA + n malonyl-CoA + 2n NADPH + 4n H(+) = a long-chain-acyl-CoA + n CoA + n CO2 + 2n NADP(+).. It carries out the reaction a fatty acyl-[ACP] + malonyl-[ACP] + H(+) = a 3-oxoacyl-[ACP] + holo-[ACP] + CO2. The catalysed reaction is a (3R)-hydroxyacyl-[ACP] + NADP(+) = a 3-oxoacyl-[ACP] + NADPH + H(+). It functions in the pathway mycotoxin biosynthesis; aflatoxin biosynthesis. Functionally, fatty acid synthase alpha subunit; part of the gene cluster that mediates the biosynthesis of aflatoxins, a group of polyketide-derived furanocoumarins, and part of the most toxic and carcinogenic compounds among the known mycotoxins. The four major aflatoxins produced by A.parasiticus are aflatoxin B1 (AFB1), aflatoxin B2 (AFB2), aflatoxin G1 (AFG1) and aflatoxin G2 (AFG2). Within the aflatoxin pathway, the fungal fatty acid synthase aflA/aflB provides the hexanoyl starter unit to the acyl-carrier protein (ACP) domain of the norsolorinic acid synthase to allow the first step of the pathway. The biosynthesis of aflatoxins begins with the norsolorinic acid synthase aflC that combines a hexanoyl starter unit produced by the fatty acid synthase aflA/aflB and 7 malonyl-CoA extender units to synthesize the precursor NOR. The second step is the conversion of NOR to averantin (AVN) and requires the norsolorinic acid ketoreductase aflD, which catalyzes the dehydration of norsolorinic acid to form (1'S)-averantin. The norsolorinic acid reductases aflE and aflF may also play a role in the conversion of NOR to AVN. The cytochrome P450 monooxygenase aflG then catalyzes the hydroxylation of AVN to 5'hydroxyaverantin (HAVN). The next step is performed by the 5'-hydroxyaverantin dehydrogenase aflH that transforms HAVN to 5'-oxoaverantin (OAVN) which is further converted to averufin (AVF) by aflK that plays a dual role in the pathway, as a 5'-oxoaverantin cyclase that mediates conversion of 5'-oxoaverantin, as well as a versicolorin B synthase in a later step in the pathway. The averufin oxidase aflI catalyzes the conversion of AVF to versiconal hemiacetal acetate (VHA). VHA is then the substrate for the versiconal hemiacetal acetate esterase aflJ to yield versiconal (VAL). Versicolorin B synthase aflK then converts VAL to versicolorin B (VERB) by closing the bisfuran ring of aflatoxin which is required for DNA-binding, thus giving to aflatoxin its activity as a mutagen. Then, the activity of the versicolorin B desaturase aflL leads to versicolorin A (VERA). A branch point starts from VERB since it can also be converted to dihydrodemethylsterigmatocystin (DMDHST), probably also by aflL, VERA being a precursor for aflatoxins B1 and G1, and DMDHST for aflatoxins B2 and G2. Next, the versicolorin reductase aflM and the cytochrome P450 monooxygenase aflN are involved in conversion of VERA to demethylsterigmatocystin (DMST). AflX and aflY seem also involved in this step, through probable aflX-mediated epoxide ring-opening step following versicolorin A oxidation and aflY-mediated Baeyer-Villiger oxidation required for the formation of the xanthone ring. The methyltransferase aflO then leads to the modification of DMST to sterigmatocystin (ST), and of DMDHST to dihydrosterigmatocystin (DHST). Both ST and DHST are then substrates of the O-methyltransferase aflP to yield O-methylsterigmatocystin (OMST) and dihydro-O-methylsterigmatocystin (DHOMST), respectively. Finally OMST is converted to aflatoxins B1 and G1, and DHOMST to aflatoxins B2 and G2, via the action of several enzymes including O-methylsterigmatocystin oxidoreductase aflQ, the cytochrome P450 monooxygenase aflU, but also the NADH-dependent flavin oxidoreductase nadA which is specifically required for the synthesis of AFG1. The protein is Fatty acid synthase alpha subunit aflA of Aspergillus parasiticus (strain ATCC 56775 / NRRL 5862 / SRRC 143 / SU-1).